The chain runs to 65 residues: Putative antitoxin MJECL31 (65 aa).

It belongs to the UPF0165 family.

Its function is as follows. Possibly the antitoxin component of a type II toxin-antitoxin (TA) system. This Methanocaldococcus jannaschii (strain ATCC 43067 / DSM 2661 / JAL-1 / JCM 10045 / NBRC 100440) (Methanococcus jannaschii) protein is Putative antitoxin MJECL31.